The primary structure comprises 103 residues: Pro-corazonin (103 aa).

The first 19 residues, 1-19 (MSANVTLLLIFVTLASVTA), serve as a signal peptide directing secretion. Position 20 is a pyrrolidone carboxylic acid (Gln20). At Asn30 the chain carries Asparagine amide. The propeptide occupies 34–103 (DQGHLRPELK…NLNAMMDAFY (70 aa)).

Expressed in corpora cardiaca (CC), corpora allata (CA), antennal lobe (AL) and gnathal ganglion (GNG) (at protein level). Expression in CC and CA detected in all animals, expression in AL and in GNG in some animals.

It is found in the secreted. Cardioactive peptide. Corazonin is probably involved in the physiological regulation of the heart beat. This chain is Pro-corazonin, found in Agrotis ipsilon (Black cutworm moth).